Here is a 304-residue protein sequence, read N- to C-terminus: Acetyl-coenzyme A carboxylase carboxyl transferase subunit beta (304 aa).

A CoA carboxyltransferase N-terminal domain is found at 23 to 292 (VWTKCDSCGQ…PNPDAPREGV (270 aa)). Zn(2+)-binding residues include Cys27, Cys30, Cys46, and Cys49. A C4-type zinc finger spans residues 27–49 (CDSCGQVLYRAELERNLEVCPKC). Positions 284 to 304 (NPDAPREGVVVPPAPDQESEV) are disordered.

This sequence belongs to the AccD/PCCB family. As to quaternary structure, acetyl-CoA carboxylase is a heterohexamer composed of biotin carboxyl carrier protein (AccB), biotin carboxylase (AccC) and two subunits each of ACCase subunit alpha (AccA) and ACCase subunit beta (AccD). Zn(2+) is required as a cofactor.

It is found in the cytoplasm. The enzyme catalyses N(6)-carboxybiotinyl-L-lysyl-[protein] + acetyl-CoA = N(6)-biotinyl-L-lysyl-[protein] + malonyl-CoA. The protein operates within lipid metabolism; malonyl-CoA biosynthesis; malonyl-CoA from acetyl-CoA: step 1/1. Functionally, component of the acetyl coenzyme A carboxylase (ACC) complex. Biotin carboxylase (BC) catalyzes the carboxylation of biotin on its carrier protein (BCCP) and then the CO(2) group is transferred by the transcarboxylase to acetyl-CoA to form malonyl-CoA. This chain is Acetyl-coenzyme A carboxylase carboxyl transferase subunit beta, found in Salmonella paratyphi A (strain ATCC 9150 / SARB42).